Reading from the N-terminus, the 191-residue chain is Large ribosomal subunit protein bL9 (191 aa).

The interval E171–E191 is disordered.

This sequence belongs to the bacterial ribosomal protein bL9 family.

Functionally, binds to the 23S rRNA. The polypeptide is Large ribosomal subunit protein bL9 (Rhizobium meliloti (strain 1021) (Ensifer meliloti)).